The following is a 1275-amino-acid chain: MENFILYEEIGRGSKTVVYKGRRKGTINFVAILCTDKCKRPEITNWVRLTREIKHKNIVTFHEWYETSNHLWLVVELCTGGSLKTVIAQDENLPEDVVREFGIDLISGLHHLHKLGILFCDISPRKILLEGPGTLKFSNFCLAKVEGENLEEFFALVAAEEGGGDNGENVLKKSMKSRVKGSPVYTAPEVVRGADFSISSDLWSLGCLLYEMFSGKPPFFSESISELTEKILCEDPLPPIPKDSSRPKASSDFINLLDGLLQRDPQKRLTWTRLLQHSFWKKAFAGADQESSVEDLSLSRNTMECSGPQDSKELLQNSQSRQAKGHKSGQPLGHSFRLENPTEFRPKSTLEGQLNESMFLLSSRPTPRTSTAVEVSPGEDMTHCSPQKTSPLTKITSGHLSQQDLESQMRELIYTDSDLVVTPIIDNPKIMKQPPVKFDAKILHLPTYSVDKLLFLKDQDWNDFLQQVCSQIDSTEKSMGASRAKLNLLCYLCVVAGHQEVATRLLHSPLFQLLIQHLRIAPNWDIRAKVAHVIGLLASHTAELQENTPVVEAIVLLTELIRENFRNSKLKQCLLPTLGELIYLVATQEEKKKNPRECWAVPLAAYTVLMRCLREGEERVVNHMAAKIIENVCTTFSAQSQGFITGEIGPILWYLFRHSTADSLRITAVSALCRITRHSPTAFQNVIEKVGLNSVINSLASAICKVQQYMLTLFAAMLSCGIHLQRLIQEKGFVSTIIRLLDSPSTCIRAKAFLVLLYILIYNREMLLLSCQARLVMYIERDSRKTTPGKEQQSGNEYLSKCLDLLICHIVQELPRILGDILNSLANVSGRKHPSTVQVKQLKLCLPLMPVVLHLVTSQVFRPQVVTEEFLFSYGTILSHIKSVDSGETNIDGAIGLTASEEFIKITLSAFEAIIQYPILLKDYRSTVVDYILPPLVSLVQSQNVEWRLFSLRLLSETTSLLVNQEFGDGKEKASVDSDSNLLALIRDVLLPQYEHILLEPDPVPAYALKLLVAMTEHNPTFTRLVEESKLIPLIFEVTLEHQESILGNTMQSVIALLSNLVACKDSNMELLYEQGLVSHICNLLTETATLCLDVDNKNNNEMAAPLLFSLLDILHSMLTYTSGIVRLALQAQKSGSGEDPQAAEDLLLLNRPLTDLISLLIPLLPNEDPEIFDVSSKCLSILVQLYGGENPDSLSPENVEIFAHLLTSKEDPKEQKLLLRILRRMITSNEKHLESLKNAGSLLRALERLAPGSGSFADSAVAPLALEILQAVGH.

Positions 4 to 280 (FILYEEIGRG…WTRLLQHSFW (277 aa)) constitute a Protein kinase domain. Disordered regions lie at residues 299 to 350 (SRNT…KSTL) and 364 to 392 (RPTP…TSPL). The span at 336-348 (FRLENPTEFRPKS) shows a compositional bias: basic and acidic residues. A compositionally biased stretch (polar residues) spans 364–373 (RPTPRTSTAV). 5 HEAT repeats span residues 842–880 (LKLC…ILSH), 926–964 (STVV…LLVN), 1025–1063 (LVEE…NLVA), 1151–1189 (NRPL…LYGG), and 1213–1253 (PKEQ…LAPG).

The protein belongs to the protein kinase superfamily. Ser/Thr protein kinase family. APG1/unc-51/ULK1 subfamily. In terms of tissue distribution, expressed in the brain, mainly in postmitotic neurons, including GABAergic neurons, but not in astrocytes (at protein level).

It catalyses the reaction L-seryl-[protein] + ATP = O-phospho-L-seryl-[protein] + ADP + H(+). The catalysed reaction is L-threonyl-[protein] + ATP = O-phospho-L-threonyl-[protein] + ADP + H(+). In terms of biological role, may be involved in the remodeling of cytoskeletal components, such as alpha-tubulin, and in this way regulates neurite branching and elongation, as well as cell motility. The chain is Serine/threonine-protein kinase ULK4 (ULK4) from Homo sapiens (Human).